The chain runs to 424 residues: Serine hydroxymethyltransferase (424 aa).

Residues L119 and 123–125 (GHL) contribute to the (6S)-5,6,7,8-tetrahydrofolate site. An N6-(pyridoxal phosphate)lysine modification is found at K228. 353 to 355 (SAF) is a (6S)-5,6,7,8-tetrahydrofolate binding site.

Belongs to the SHMT family. As to quaternary structure, homodimer. Pyridoxal 5'-phosphate is required as a cofactor.

It localises to the cytoplasm. The catalysed reaction is (6R)-5,10-methylene-5,6,7,8-tetrahydrofolate + glycine + H2O = (6S)-5,6,7,8-tetrahydrofolate + L-serine. Its pathway is one-carbon metabolism; tetrahydrofolate interconversion. It functions in the pathway amino-acid biosynthesis; glycine biosynthesis; glycine from L-serine: step 1/1. Its function is as follows. Catalyzes the reversible interconversion of serine and glycine with tetrahydrofolate (THF) serving as the one-carbon carrier. Also exhibits THF-independent aldolase activity toward beta-hydroxyamino acids, producing glycine and aldehydes, via a retro-aldol mechanism. The polypeptide is Serine hydroxymethyltransferase (Natronomonas pharaonis (strain ATCC 35678 / DSM 2160 / CIP 103997 / JCM 8858 / NBRC 14720 / NCIMB 2260 / Gabara) (Halobacterium pharaonis)).